Reading from the N-terminus, the 397-residue chain is Polygalacturonase (397 aa).

The signal sequence occupies residues 1-22 (MGSYLGIYTILVLCLLGYSANA). PbH1 repeat units follow at residues 169-195 (GKNM…HLGR), 196-217 (CEGV…SVGD), 219-239 (MKNL…SVGS), and 249-270 (VTDI…RIKT). Asn-171 is a glycosylation site (N-linked (GlcNAc...) asparagine). Residue Asp-210 is the Proton donor of the active site. An intrachain disulfide couples Cys-212 to Cys-229. His-233 is an active-site residue. An N-linked (GlcNAc...) asparagine glycan is attached at Asn-256. Intrachain disulfides connect Cys-341–Cys-347 and Cys-370–Cys-386.

It belongs to the glycosyl hydrolase 28 family. As to expression, pollen.

It is found in the secreted. The protein resides in the cell wall. The enzyme catalyses (1,4-alpha-D-galacturonosyl)n+m + H2O = (1,4-alpha-D-galacturonosyl)n + (1,4-alpha-D-galacturonosyl)m.. In terms of biological role, may function in depolymerizing pectin during pollen development, germination, and tube growth. The chain is Polygalacturonase from Brassica napus (Rape).